The sequence spans 212 residues: Large ribosomal subunit protein uL3 (212 aa).

Residue Gln-153 is modified to N5-methylglutamine.

Belongs to the universal ribosomal protein uL3 family. In terms of assembly, part of the 50S ribosomal subunit. Forms a cluster with proteins L14 and L19. Post-translationally, methylated by PrmB.

In terms of biological role, one of the primary rRNA binding proteins, it binds directly near the 3'-end of the 23S rRNA, where it nucleates assembly of the 50S subunit. The chain is Large ribosomal subunit protein uL3 from Shewanella piezotolerans (strain WP3 / JCM 13877).